The chain runs to 572 residues: Protein IQ-DOMAIN 30 (572 aa).

The segment at 75-96 is disordered; sequence SDDEIQVSEVQPTDSQDVASVP. Over residues 82–92 the composition is skewed to polar residues; the sequence is SEVQPTDSQDV. 2 consecutive IQ domains span residues 108–136 and 137–154; these read QEIA…GIIR and LQAL…VSTL. The tract at residues 159–178 is calmodulin-binding; that stretch reads GIVRLQALARGREIRHSDIG. Disordered regions lie at residues 282-332 and 399-572; these read RPKK…MDNP and IQTH…EWKR. Composition is skewed to polar residues over residues 291 to 305 and 400 to 419; these read PSSN…QTSS and QTHT…VNQI. A compositionally biased stretch (basic and acidic residues) spans 428 to 455; the sequence is AEEKEDVKEERTPKQNHKENSAGKENQK. 3 stretches are compositionally biased toward polar residues: residues 459 to 493, 502 to 514, and 522 to 560; these read KASS…QATK, QGSS…GTTE, and LPSS…SSRE.

Belongs to the IQD family. In terms of assembly, binds to multiple calmodulin (CaM) in the presence of Ca(2+) and CaM-like proteins.

The protein resides in the nucleus envelope. It localises to the cytoplasm. It is found in the cytoskeleton. In terms of biological role, may be involved in cooperative interactions with calmodulins or calmodulin-like proteins. Recruits calmodulin proteins to microtubules, thus being a potential scaffold in cellular signaling and trafficking. May associate with nucleic acids and regulate gene expression at the transcriptional or post-transcriptional level. This chain is Protein IQ-DOMAIN 30, found in Arabidopsis thaliana (Mouse-ear cress).